The primary structure comprises 423 residues: MTISALGINHKTASVDLREQVAFSAEQLDAALQAVRNLQGVEEAVIVSTCNRTELYCRGEVSGDLLLGWLTGFHKLAPNALENHHYHFQGEQAITHLMSVASGLDSLVLGEPQILGQVKQAYQAAKRQASVGGILERLFQQTFRVAKTVRNETAVGQNAVSVAYAAVSMARHIFANLQKSKVLLIGAGDTSELVAQHLKQQGVTEILVANRTLQRASEMAERVGATAHSLSELSELLPQADIVVSSTASTLPIVGKGSIEKALKKRRHRPMLLIDLAVPRDIEEQVNELDDAYLYTVDDLQSIISENIRNREQAAREAQVIIQQQTKEFNDWLKSLNSVELVREYRTHTKTLADEQLKKALAQIEQGKDPAEVLQRFSHRLVQQLTHKPTSLLKSAGENNDQYTLAVLQQLWSEPSSDSSKGK.

Substrate is bound by residues 49-52, S106, 111-113, and Q117; these read TCNR and EPQ. The Nucleophile role is filled by C50. 186-191 contacts NADP(+); it reads GAGDTS.

The protein belongs to the glutamyl-tRNA reductase family. In terms of assembly, homodimer.

It carries out the reaction (S)-4-amino-5-oxopentanoate + tRNA(Glu) + NADP(+) = L-glutamyl-tRNA(Glu) + NADPH + H(+). Its pathway is porphyrin-containing compound metabolism; protoporphyrin-IX biosynthesis; 5-aminolevulinate from L-glutamyl-tRNA(Glu): step 1/2. Functionally, catalyzes the NADPH-dependent reduction of glutamyl-tRNA(Glu) to glutamate 1-semialdehyde (GSA). The protein is Glutamyl-tRNA reductase of Idiomarina loihiensis (strain ATCC BAA-735 / DSM 15497 / L2-TR).